The sequence spans 24 residues: Bombinin (24 aa).

Position 24 is an asparagine amide (Asn-24).

It belongs to the bombinin family. Expressed by the skin glands.

It localises to the secreted. Has antimicrobial and hemolytic activities. The sequence is that of Bombinin from Bombina variegata (Yellow-bellied toad).